An 88-amino-acid chain; its full sequence is Electron transfer flavoprotein regulatory factor 1 (88 aa).

It belongs to the complex I LYR family. In terms of assembly, homotetramer. Interacts with NDUFAB1. Interacts with ETFA. Interacts with ETFB.

Its subcellular location is the mitochondrion. In terms of biological role, acts as a regulator of the electron transfer flavoprotein by promoting the removal of flavin from the ETF holoenzyme (composed of ETFA and ETFB). The chain is Electron transfer flavoprotein regulatory factor 1 from Bos taurus (Bovine).